The sequence spans 252 residues: ATP synthase subunit a (252 aa).

6 helical membrane passes run 29 to 49 (FTNV…FLFI), 87 to 107 (FFPL…IGLF), 117 to 137 (IMIT…YGFY), 146 to 166 (LFVP…IEVI), 196 to 216 (FIVS…LPLI), and 219 to 239 (VAIT…FTVL).

It belongs to the ATPase A chain family. As to quaternary structure, F-type ATPases have 2 components, CF(1) - the catalytic core - and CF(0) - the membrane proton channel. CF(1) has five subunits: alpha(3), beta(3), gamma(1), delta(1), epsilon(1). CF(0) has three main subunits: a(1), b(2) and c(9-12). The alpha and beta chains form an alternating ring which encloses part of the gamma chain. CF(1) is attached to CF(0) by a central stalk formed by the gamma and epsilon chains, while a peripheral stalk is formed by the delta and b chains.

It localises to the cell inner membrane. Its function is as follows. Key component of the proton channel; it plays a direct role in the translocation of protons across the membrane. This is ATP synthase subunit a from Bartonella henselae (strain ATCC 49882 / DSM 28221 / CCUG 30454 / Houston 1) (Rochalimaea henselae).